The following is a 110-amino-acid chain: Ribonuclease P protein component 1 (110 aa).

Belongs to the eukaryotic/archaeal RNase P protein component 1 family. Consists of a catalytic RNA component and at least 4-5 protein subunits.

It localises to the cytoplasm. It catalyses the reaction Endonucleolytic cleavage of RNA, removing 5'-extranucleotides from tRNA precursor.. In terms of biological role, part of ribonuclease P, a protein complex that generates mature tRNA molecules by cleaving their 5'-ends. The protein is Ribonuclease P protein component 1 of Methanosarcina mazei (strain ATCC BAA-159 / DSM 3647 / Goe1 / Go1 / JCM 11833 / OCM 88) (Methanosarcina frisia).